We begin with the raw amino-acid sequence, 700 residues long: Chaperonin CPN60, mitochondrial (700 aa).

Residues M1–L9 constitute a mitochondrion transit peptide. Residues T636–E700 are disordered. Residues D644–E700 show a composition bias toward acidic residues.

It belongs to the chaperonin (HSP60) family.

The protein localises to the mitochondrion matrix. Its function is as follows. Implicated in mitochondrial protein import and macromolecular assembly. May facilitate the correct folding of imported proteins. May also prevent misfolding and promote the refolding and proper assembly of unfolded polypeptides generated under stress conditions in the mitochondrial matrix. This chain is Chaperonin CPN60, mitochondrial, found in Plasmodium falciparum (isolate FCR-3 / Gambia).